We begin with the raw amino-acid sequence, 342 residues long: Galactose mutarotase (342 aa).

Ala2 carries the N-acetylalanine modification. The residue at position 14 (Ser14) is a Phosphoserine. Beta-D-galactose is bound by residues 81 to 82 (NR) and His107. Residue Ser124 is modified to Phosphoserine. His176 acts as the Proton donor in catalysis. Beta-D-galactose contacts are provided by residues 176 to 178 (HSY), Asp243, Gln279, and Glu307. Glu307 (proton acceptor) is an active-site residue.

It belongs to the aldose epimerase family. Monomer.

It is found in the cytoplasm. The catalysed reaction is alpha-D-galactose = beta-D-galactose. The enzyme catalyses alpha-D-glucose = beta-D-glucose. The protein operates within carbohydrate metabolism; hexose metabolism. It functions in the pathway carbohydrate metabolism; galactose metabolism. In terms of biological role, mutarotase that catalyzes the interconversion of beta-D-galactose and alpha-D-galactose during galactose metabolism. Beta-D-galactose is metabolized in the liver into glucose 1-phosphate, the primary metabolic fuel, by the action of four enzymes that constitute the Leloir pathway: GALM, GALK1 (galactokinase), GALT (galactose-1-phosphate uridylyltransferase) and GALE (UDP-galactose-4'-epimerase). Involved in the maintenance of the equilibrium between the beta- and alpha-anomers of galactose, therefore ensuring a sufficient supply of the alpha-anomer for GALK1. Also active on D-glucose although shows a preference for galactose over glucose. In Homo sapiens (Human), this protein is Galactose mutarotase.